The primary structure comprises 309 residues: THAP domain-containing protein 7 (309 aa).

Residues 1 to 93 form a THAP-type zinc finger; sequence MPRHCSAAGC…LKEGAVPTIF (93 aa). Ser162 carries the phosphoserine modification. Positions 176–210 are disordered; the sequence is SDLLGPLGAQADEAGCSTQPSPEQHPSPLEPQPAS. Residues 198-209 are compositionally biased toward pro residues; it reads EQHPSPLEPQPA. Ser210 is subject to Phosphoserine. The HCFC1-binding motif (HBM) signature appears at 229-232; sequence EHSY.

Forms homodimers. Interacts with HDAC3 and nuclear hormone receptor corepressors. Interacts via HBM with HCFC1.

It is found in the nucleus. The protein localises to the chromosome. Functionally, chromatin-associated, histone tail-binding protein that represses transcription via recruitment of HDAC3 and nuclear hormone receptor corepressors. The protein is THAP domain-containing protein 7 (Thap7) of Mus musculus (Mouse).